Reading from the N-terminus, the 282-residue chain is Protoheme IX farnesyltransferase (282 aa).

A run of 9 helical transmembrane segments spans residues 9–29, 39–59, 79–99, 102–122, 139–159, 165–185, 210–230, 231–251, and 261–281; these read LAKP…FLLA, LPLF…GCVF, LVTG…LLIL, LVLY…GFIV, VLGG…VVNI, LALF…IAML, IMLF…VLGS, ADLF…YKSI, and VFAK…CLTM.

The protein belongs to the UbiA prenyltransferase family. Protoheme IX farnesyltransferase subfamily.

Its subcellular location is the cell inner membrane. The catalysed reaction is heme b + (2E,6E)-farnesyl diphosphate + H2O = Fe(II)-heme o + diphosphate. The protein operates within porphyrin-containing compound metabolism; heme O biosynthesis; heme O from protoheme: step 1/1. Its function is as follows. Converts heme B (protoheme IX) to heme O by substitution of the vinyl group on carbon 2 of heme B porphyrin ring with a hydroxyethyl farnesyl side group. This is Protoheme IX farnesyltransferase from Francisella tularensis subsp. tularensis (strain FSC 198).